The chain runs to 272 residues: Type III pantothenate kinase (272 aa).

6-13 (NVNNTNTL) contacts ATP. Residue 113–116 (GADR) coordinates substrate. D115 (proton acceptor) is an active-site residue. D135 contacts K(+). T138 is an ATP binding site. A substrate-binding site is contributed by T190.

This sequence belongs to the type III pantothenate kinase family. Homodimer. NH4(+) serves as cofactor. Requires K(+) as cofactor.

It localises to the cytoplasm. It catalyses the reaction (R)-pantothenate + ATP = (R)-4'-phosphopantothenate + ADP + H(+). Its pathway is cofactor biosynthesis; coenzyme A biosynthesis; CoA from (R)-pantothenate: step 1/5. Catalyzes the phosphorylation of pantothenate (Pan), the first step in CoA biosynthesis. The polypeptide is Type III pantothenate kinase (Acidobacterium capsulatum (strain ATCC 51196 / DSM 11244 / BCRC 80197 / JCM 7670 / NBRC 15755 / NCIMB 13165 / 161)).